The sequence spans 316 residues: MKVNGIHHVSALTADAQKNLDFYKKVLGLKLVKKSVNQDEPTMYHLFYGDEVANPGTELTFFEIPRIAPFHAGTNSISSIGLRVPGTEALHYWKERFEEQQVTHSGISKRAGRDILAFQDHEGQRLVLTADEEGKGYGLPVKQSGIPEEFSFRGLGPVELTVPYAEPTLHVLTNILGFTEISREPVEGQGTAVILESGEGGAATEIHLIERNDLPRERQGKGSVHHVAFRVRDEEELAGWHRIISREGFSNSGIVERYYFKALYFREPNGILFELSTDGPGFMVDENLDELGQTIALPPYLEHRRAEIEAKLKPIQ.

VOC domains are found at residues 5–131 (GIHH…LTAD) and 154–278 (GLGP…LSTD). Histidine 8, histidine 226, and glutamate 274 together coordinate Fe cation.

It belongs to the extradiol ring-cleavage dioxygenase family. The cofactor is Fe(2+).

It localises to the cytoplasm. Its function is as follows. Putative ring-cleavage dioxygenase that may contribute to the degradation of aromatic compounds. The protein is Putative ring-cleaving dioxygenase MhqA (mhqA) of Bacillus subtilis (strain 168).